Consider the following 319-residue polypeptide: Putative peptide biosynthesis protein YydG (319 aa).

The region spanning 1 to 214 (MYNKTVSINL…HCPGYDIVYH (214 aa)) is the Radical SAM core domain. [4Fe-4S] cluster is bound by residues Cys-14, Cys-18, and Cys-21.

[4Fe-4S] cluster is required as a cofactor.

In terms of biological role, required for production of the modified peptide YydF. May activate a metalloenzyme (Potential). The sequence is that of Putative peptide biosynthesis protein YydG (yydG) from Bacillus subtilis (strain 168).